The following is a 242-amino-acid chain: Small ribosomal subunit protein uS2 (242 aa).

It belongs to the universal ribosomal protein uS2 family.

In Pseudoalteromonas translucida (strain TAC 125), this protein is Small ribosomal subunit protein uS2.